The primary structure comprises 1313 residues: Kinesin-like protein KIN-12B (1313 aa).

The interval methionine 1–leucine 74 is disordered. The span at glutamate 17–threonine 26 shows a compositional bias: polar residues. Residues glycine 96–isoleucine 431 form the Kinesin motor domain. Glycine 170–threonine 177 contributes to the ATP binding site. Microtubules-binding regions lie at residues serine 298–histidine 302, valine 331–glutamate 337, and histidine 380–arginine 384. Positions lysine 429–glycine 467 are neck. The tract at residues glutamate 685 to lysine 709 is disordered. The span at arginine 699 to glutamine 708 shows a compositional bias: polar residues. 3 coiled-coil regions span residues leucine 932–serine 1003, alanine 1062–glutamate 1130, and glutamate 1167–serine 1241.

Belongs to the TRAFAC class myosin-kinesin ATPase superfamily. Kinesin family. KIN-12 subfamily. As to quaternary structure, homodimer and heterodimer with KIN12A. Interacts with TIO.

Its subcellular location is the cytoplasm. It localises to the cytoskeleton. It is found in the phragmoplast. Functionally, plus-end directed kinesin-like motor enzyme that plays a critical role in the organization of phragmoplast microtubules during cytokinesis. Constitutes a signaling module in association with serine/threonine-protein kinase TIO that is required to support phragmoplast expansion and cell-plate growth in plant cells. This is Kinesin-like protein KIN-12B from Arabidopsis thaliana (Mouse-ear cress).